The primary structure comprises 59 residues: Large ribosomal subunit protein uL30 (59 aa).

It belongs to the universal ribosomal protein uL30 family. As to quaternary structure, part of the 50S ribosomal subunit.

This Desulfatibacillum aliphaticivorans protein is Large ribosomal subunit protein uL30.